The sequence spans 462 residues: ATP synthase subunit beta (462 aa).

An ATP-binding site is contributed by 151–158; it reads GGAGVGKT.

It belongs to the ATPase alpha/beta chains family. As to quaternary structure, F-type ATPases have 2 components, CF(1) - the catalytic core - and CF(0) - the membrane proton channel. CF(1) has five subunits: alpha(3), beta(3), gamma(1), delta(1), epsilon(1). CF(0) has four main subunits: a(1), b(1), b'(1) and c(9-12).

It is found in the cell inner membrane. It carries out the reaction ATP + H2O + 4 H(+)(in) = ADP + phosphate + 5 H(+)(out). Its function is as follows. Produces ATP from ADP in the presence of a proton gradient across the membrane. The catalytic sites are hosted primarily by the beta subunits. This chain is ATP synthase subunit beta, found in Chlorobium phaeobacteroides (strain DSM 266 / SMG 266 / 2430).